A 299-amino-acid polypeptide reads, in one-letter code: GTPase Era (299 aa).

The 168-residue stretch at Lys5–Glu172 folds into the Era-type G domain. Positions Gly13–Ser20 are G1. Residue Gly13–Ser20 participates in GTP binding. The G2 stretch occupies residues Gln39 to Asn43. The tract at residues Asp60–Gly63 is G3. Residues Asp60–Ile64 and Asn122–Asp125 each bind GTP. A G4 region spans residues Asn122–Asp125. Residues Ile151–Ala153 are G5. One can recognise a KH type-2 domain in the interval Thr203–Arg280.

It belongs to the TRAFAC class TrmE-Era-EngA-EngB-Septin-like GTPase superfamily. Era GTPase family. Monomer.

The protein localises to the cytoplasm. The protein resides in the cell membrane. In terms of biological role, an essential GTPase that binds both GDP and GTP, with rapid nucleotide exchange. Plays a role in 16S rRNA processing and 30S ribosomal subunit biogenesis and possibly also in cell cycle regulation and energy metabolism. This Staphylococcus epidermidis (strain ATCC 12228 / FDA PCI 1200) protein is GTPase Era.